We begin with the raw amino-acid sequence, 359 residues long: Tropomodulin-1 (359 aa).

The segment at glutamate 36–proline 61 is disordered. Residues proline 39–histidine 138 form a tropomyosin-binding region.

Belongs to the tropomodulin family. Binds to the N-terminus of tropomyosin and to actin. Interacts with FLII. Highly expressed in the erythrocyte, heart and skeletal muscle.

The protein localises to the cytoplasm. It localises to the cytoskeleton. Functionally, blocks the elongation and depolymerization of the actin filaments at the pointed end. The Tmod/TM complex contributes to the formation of the short actin protofilament, which in turn defines the geometry of the membrane skeleton. The polypeptide is Tropomodulin-1 (Tmod1) (Mus musculus (Mouse)).